The primary structure comprises 139 residues: MANSSSGLAVSDECKVKFRDLKARRSFRFIVFRIDDKDMEIKVDRLGEPNQGYGDFTDSLPADECRYAIYDLDFTTVENCQKSKIFFFSWSPDTARTRSKMLYASSKDRFRRELDGIQCEIQATDPSEMSLDIVKSRTN.

Positions 7–139 constitute an ADF-H domain; it reads GLAVSDECKV…SLDIVKSRTN (133 aa).

This sequence belongs to the actin-binding proteins ADF family. As to expression, expressed in pollen.

Functionally, actin-depolymerizing protein. Severs actin filaments (F-actin) and binds to actin monomers. This chain is Actin-depolymerizing factor 2 (ADF2), found in Zea mays (Maize).